We begin with the raw amino-acid sequence, 211 residues long: Thiamine-phosphate synthase (211 aa).

4-amino-2-methyl-5-(diphosphooxymethyl)pyrimidine-binding positions include 37–41 (QLRIK) and Asn69. Mg(2+) is bound by residues Asp70 and Asp89. 4-amino-2-methyl-5-(diphosphooxymethyl)pyrimidine is bound at residue Ser108. 134-136 (TQT) provides a ligand contact to 2-[(2R,5Z)-2-carboxy-4-methylthiazol-5(2H)-ylidene]ethyl phosphate. Lys137 lines the 4-amino-2-methyl-5-(diphosphooxymethyl)pyrimidine pocket. 2-[(2R,5Z)-2-carboxy-4-methylthiazol-5(2H)-ylidene]ethyl phosphate is bound by residues Gly166 and 186–187 (IS).

This sequence belongs to the thiamine-phosphate synthase family. It depends on Mg(2+) as a cofactor.

It catalyses the reaction 2-[(2R,5Z)-2-carboxy-4-methylthiazol-5(2H)-ylidene]ethyl phosphate + 4-amino-2-methyl-5-(diphosphooxymethyl)pyrimidine + 2 H(+) = thiamine phosphate + CO2 + diphosphate. The catalysed reaction is 2-(2-carboxy-4-methylthiazol-5-yl)ethyl phosphate + 4-amino-2-methyl-5-(diphosphooxymethyl)pyrimidine + 2 H(+) = thiamine phosphate + CO2 + diphosphate. It carries out the reaction 4-methyl-5-(2-phosphooxyethyl)-thiazole + 4-amino-2-methyl-5-(diphosphooxymethyl)pyrimidine + H(+) = thiamine phosphate + diphosphate. It functions in the pathway cofactor biosynthesis; thiamine diphosphate biosynthesis; thiamine phosphate from 4-amino-2-methyl-5-diphosphomethylpyrimidine and 4-methyl-5-(2-phosphoethyl)-thiazole: step 1/1. Condenses 4-methyl-5-(beta-hydroxyethyl)thiazole monophosphate (THZ-P) and 2-methyl-4-amino-5-hydroxymethyl pyrimidine pyrophosphate (HMP-PP) to form thiamine monophosphate (TMP). In Shigella boydii serotype 4 (strain Sb227), this protein is Thiamine-phosphate synthase.